The chain runs to 191 residues: FMN-dependent NADH:quinone oxidoreductase 1 (191 aa).

Residues Ser-10 and 16 to 18 (SVS) contribute to the FMN site.

The protein belongs to the azoreductase type 1 family. As to quaternary structure, homodimer. The cofactor is FMN.

It carries out the reaction 2 a quinone + NADH + H(+) = 2 a 1,4-benzosemiquinone + NAD(+). The catalysed reaction is N,N-dimethyl-1,4-phenylenediamine + anthranilate + 2 NAD(+) = 2-(4-dimethylaminophenyl)diazenylbenzoate + 2 NADH + 2 H(+). Its function is as follows. Quinone reductase that provides resistance to thiol-specific stress caused by electrophilic quinones. In terms of biological role, also exhibits azoreductase activity. Catalyzes the reductive cleavage of the azo bond in aromatic azo compounds to the corresponding amines. The polypeptide is FMN-dependent NADH:quinone oxidoreductase 1 (Jannaschia sp. (strain CCS1)).